We begin with the raw amino-acid sequence, 143 residues long: MGKPRGIRTARKHVNHRREQRWADKDYKKAHMGTRWKANPFGGASHAKGIVLEKVGVEAKQPNSAIRKCVRVQLIKNGKKVTAFVPRDGCLNHIEENDEVLVAGFGRKGHAVGDIPGVRFKVVKVANVSLLALYKEKKERPRS.

Residues 1–19 are compositionally biased toward basic residues; the sequence is MGKPRGIRTARKHVNHRRE. The disordered stretch occupies residues 1 to 21; it reads MGKPRGIRTARKHVNHRREQR. At P62 the chain carries Hydroxyproline.

The protein belongs to the universal ribosomal protein uS12 family. As to quaternary structure, component of the 40S small ribosomal subunit.

The protein localises to the cytoplasm. It localises to the cytosol. It is found in the rough endoplasmic reticulum. The protein is Small ribosomal subunit protein uS12 (RpS23) of Papilio dardanus (African swallowtail butterfly).